Consider the following 434-residue polypeptide: F-box/LRR-repeat protein 21 (434 aa).

Positions 39 to 85 constitute an F-box domain; sequence LLDWGTLPHHVILQIFQYLPLIDRARASSVCRRWNEVFHIPDLWRKF. 6 LRR repeats span residues 187-213, 214-239, 242-265, 322-347, 349-374, and 375-400; these read DTPV…KMSS, CPHV…ALNY, LSDE…RIDV, GRSV…VVCA, GLLP…GLSE, and CEVS…SIME.

Part of the SCF (SKP1-CUL1-F-box) E3 ubiquitin-protein ligase complex SCF(FBXL21) composed of CUL1, SKP1, RBX1 and FBXL21. Interacts with CRY1 and CRY2. Expressed in the hypothalamus, especially in the suprachiasmatic nucleus (SCN). Expression is driven by the core-clock. There is a pronounced diurnal and circadian expression rhythms rising rapidly at the start of the day and declining at the onset of the night.

The protein localises to the cytoplasm. It is found in the cytosol. The protein resides in the nucleus. It participates in protein modification; protein ubiquitination. In terms of biological role, substrate-recognition component of the SCF(FBXL21) E3 ubiquitin ligase complex involved in circadian rhythm function. Plays a key role in the maintenance of both the speed and the robustness of the circadian clock oscillation. The SCF(FBXL21) complex mainly acts in the cytosol and mediates ubiquitination of CRY proteins (CRY1 and CRY2), leading to CRY proteins stabilization. The SCF(FBXL21) complex counteracts the activity of the SCF(FBXL3) complex and protects CRY proteins from degradation. Involved in the hypothalamic suprachiasmatic nucleus (SCN) clock regulating temporal organization of the daily activities. This chain is F-box/LRR-repeat protein 21 (Fbxl21), found in Mus musculus (Mouse).